The sequence spans 313 residues: Porphobilinogen deaminase (313 aa).

Cys-242 carries the post-translational modification S-(dipyrrolylmethanemethyl)cysteine.

It belongs to the HMBS family. Monomer. The cofactor is dipyrromethane.

It catalyses the reaction 4 porphobilinogen + H2O = hydroxymethylbilane + 4 NH4(+). It participates in porphyrin-containing compound metabolism; protoporphyrin-IX biosynthesis; coproporphyrinogen-III from 5-aminolevulinate: step 2/4. Its function is as follows. Tetrapolymerization of the monopyrrole PBG into the hydroxymethylbilane pre-uroporphyrinogen in several discrete steps. The polypeptide is Porphobilinogen deaminase (Salmonella dublin (strain CT_02021853)).